The chain runs to 960 residues: Isoleucine--tRNA ligase (960 aa).

The 'HIGH' region signature appears at 82–92 (PYANGHIHIGH). An L-isoleucyl-5'-AMP-binding site is contributed by Glu-606. Residues 647 to 651 (KMSKS) carry the 'KMSKS' region motif. Lys-650 is an ATP binding site. Zn(2+)-binding residues include Cys-931, Cys-934, Cys-951, and Cys-954.

It belongs to the class-I aminoacyl-tRNA synthetase family. IleS type 1 subfamily. Monomer. Zn(2+) serves as cofactor.

It is found in the cytoplasm. The catalysed reaction is tRNA(Ile) + L-isoleucine + ATP = L-isoleucyl-tRNA(Ile) + AMP + diphosphate. Functionally, catalyzes the attachment of isoleucine to tRNA(Ile). As IleRS can inadvertently accommodate and process structurally similar amino acids such as valine, to avoid such errors it has two additional distinct tRNA(Ile)-dependent editing activities. One activity is designated as 'pretransfer' editing and involves the hydrolysis of activated Val-AMP. The other activity is designated 'posttransfer' editing and involves deacylation of mischarged Val-tRNA(Ile). In Gluconobacter oxydans (strain 621H) (Gluconobacter suboxydans), this protein is Isoleucine--tRNA ligase.